A 237-amino-acid chain; its full sequence is Probable transcriptional regulatory protein Exig_1693 (237 aa).

The protein belongs to the TACO1 family. YeeN subfamily.

It is found in the cytoplasm. The protein is Probable transcriptional regulatory protein Exig_1693 of Exiguobacterium sibiricum (strain DSM 17290 / CCUG 55495 / CIP 109462 / JCM 13490 / 255-15).